Here is a 495-residue protein sequence, read N- to C-terminus: Histidine--tRNA ligase (495 aa).

It belongs to the class-II aminoacyl-tRNA synthetase family. In terms of assembly, homodimer.

The protein localises to the cytoplasm. It catalyses the reaction tRNA(His) + L-histidine + ATP = L-histidyl-tRNA(His) + AMP + diphosphate + H(+). The protein is Histidine--tRNA ligase of Bartonella henselae (strain ATCC 49882 / DSM 28221 / CCUG 30454 / Houston 1) (Rochalimaea henselae).